The primary structure comprises 228 residues: MTTWANMNLQDSASPIMEQLIYFHDHALMIIIMILMVVSYMMIAMVFNKYINRFLLEGQMIELAWTIAPAVILIFIAVPSLRLLYLMDEINTPTVTLKTIGHQWYWSYEYSDFAKVEFDSYMIPQDEMDHSMFRLLDVDNRAVLPMNTFIRIIVTAADVLHSWTIPSLGVKADATPGRLNQVSFLINRPGVLYGQCSEICGANHSFMPIVIESISTNGFINWILKMNM.

The Mitochondrial intermembrane portion of the chain corresponds to 1 to 26 (MTTWANMNLQDSASPIMEQLIYFHDH). Residues 27–48 (ALMIIIMILMVVSYMMIAMVFN) traverse the membrane as a helical segment. Residues 49–62 (KYINRFLLEGQMIE) lie on the Mitochondrial matrix side of the membrane. A helical transmembrane segment spans residues 63–82 (LAWTIAPAVILIFIAVPSLR). Topologically, residues 83-228 (LLYLMDEINT…FINWILKMNM (146 aa)) are mitochondrial intermembrane. Positions 161, 196, 198, 200, 204, and 207 each coordinate Cu cation. Glu-198 lines the Mg(2+) pocket.

The protein belongs to the cytochrome c oxidase subunit 2 family. In terms of assembly, component of the cytochrome c oxidase (complex IV, CIV), a multisubunit enzyme composed of a catalytic core of 3 subunits and several supernumerary subunits. The complex exists as a monomer or a dimer and forms supercomplexes (SCs) in the inner mitochondrial membrane with ubiquinol-cytochrome c oxidoreductase (cytochrome b-c1 complex, complex III, CIII). Cu cation serves as cofactor.

Its subcellular location is the mitochondrion inner membrane. The enzyme catalyses 4 Fe(II)-[cytochrome c] + O2 + 8 H(+)(in) = 4 Fe(III)-[cytochrome c] + 2 H2O + 4 H(+)(out). In terms of biological role, component of the cytochrome c oxidase, the last enzyme in the mitochondrial electron transport chain which drives oxidative phosphorylation. The respiratory chain contains 3 multisubunit complexes succinate dehydrogenase (complex II, CII), ubiquinol-cytochrome c oxidoreductase (cytochrome b-c1 complex, complex III, CIII) and cytochrome c oxidase (complex IV, CIV), that cooperate to transfer electrons derived from NADH and succinate to molecular oxygen, creating an electrochemical gradient over the inner membrane that drives transmembrane transport and the ATP synthase. Cytochrome c oxidase is the component of the respiratory chain that catalyzes the reduction of oxygen to water. Electrons originating from reduced cytochrome c in the intermembrane space (IMS) are transferred via the dinuclear copper A center (CU(A)) of subunit 2 and heme A of subunit 1 to the active site in subunit 1, a binuclear center (BNC) formed by heme A3 and copper B (CU(B)). The BNC reduces molecular oxygen to 2 water molecules using 4 electrons from cytochrome c in the IMS and 4 protons from the mitochondrial matrix. This chain is Cytochrome c oxidase subunit 2 (COII), found in Periplaneta americana (American cockroach).